The primary structure comprises 254 residues: Anamorsin homolog (254 aa).

An N-terminal SAM-like domain region spans residues 4-132 (VQENNHVLYI…EIGSAAKLSL (129 aa)). Residues 132-167 (LGGNKAKVAAVWKLDVDDDDDERIDEDELLDEEDKV) form a linker region. Cys177, Cys186, Cys189, and Cys191 together coordinate [2Fe-2S] cluster. The fe-S binding site A stretch occupies residues 177–191 (CGTTGKRKACKDCSC). Residues Cys215, Cys218, Cys226, and Cys229 each contribute to the [4Fe-4S] cluster site. 2 consecutive short sequence motifs (cx2C motif) follow at residues 215 to 218 (CGSC) and 226 to 229 (CATC). Residues 215–229 (CGSCYLGDAFRCATC) form a fe-S binding site B region.

Belongs to the anamorsin family. Monomer. The cofactor is [2Fe-2S] cluster. [4Fe-4S] cluster is required as a cofactor.

Its subcellular location is the cytoplasm. The protein localises to the mitochondrion intermembrane space. Functionally, component of the cytosolic iron-sulfur (Fe-S) protein assembly (CIA) machinery. Required for the maturation of extramitochondrial Fe-S proteins. Part of an electron transfer chain functioning in an early step of cytosolic Fe-S biogenesis, facilitating the de novo assembly of a [4Fe-4S] cluster on the cytosolic Fe-S scaffold complex. Electrons are transferred from NADPH via a FAD- and FMN-containing diflavin oxidoreductase. Together with the diflavin oxidoreductase, also required for the assembly of the diferric tyrosyl radical cofactor of ribonucleotide reductase (RNR), probably by providing electrons for reduction during radical cofactor maturation in the catalytic small subunit. This Aedes aegypti (Yellowfever mosquito) protein is Anamorsin homolog.